The sequence spans 160 residues: Phosphoribosyl-ATP pyrophosphatase (160 aa).

It belongs to the PRA-PH family.

It localises to the cytoplasm. It catalyses the reaction 1-(5-phospho-beta-D-ribosyl)-ATP + H2O = 1-(5-phospho-beta-D-ribosyl)-5'-AMP + diphosphate + H(+). The protein operates within amino-acid biosynthesis; L-histidine biosynthesis; L-histidine from 5-phospho-alpha-D-ribose 1-diphosphate: step 2/9. This is Phosphoribosyl-ATP pyrophosphatase from Granulibacter bethesdensis (strain ATCC BAA-1260 / CGDNIH1).